A 314-amino-acid chain; its full sequence is Trimethylamine N-oxide-binding protein (314 aa).

The signal sequence occupies residues 1-24; sequence MKKIVSLMSALVISVVSFAGISNA. Trimethylamine N-oxide-binding residues include tryptophan 38, tryptophan 85, glutamate 114, tryptophan 164, and tryptophan 212.

As to quaternary structure, the complex is probably composed of two ATP-binding proteins (TmoW), two transmembrane proteins (TmoV) and a solute-binding protein (TmoX).

It is found in the periplasm. Part of the ABC transporter complex TmoXWV involved in trimethylamine N-oxide (TMAO) import. Possesses a high binding affinity toward TMAO, but presents little binding affinity toward betaine, carnitine, trimethylamine (TMA) or dimethylamine (DMA). This chain is Trimethylamine N-oxide-binding protein, found in Pelagibacter ubique (strain HTCC1062).